A 271-amino-acid polypeptide reads, in one-letter code: Multivesicular body subunit 12A (271 aa).

Positions 7-149 constitute an MABP domain; the sequence is SAPLAGLVWS…GFAIWCKKSK (143 aa). Position 128 is a phosphothreonine (Thr-128). Residues 149–192 form a disordered region; it reads KAPRPVPKPRTLSQDMRGLSLDPPKEPSKGSHPERTLSRLGSRA. An SH3-binding motif is present at residues 153–158; the sequence is PVPKPR. A phosphoserine mark is found at Ser-161 and Ser-168. Residues 171-185 are compositionally biased toward basic and acidic residues; it reads PPKEPSKGSHPERTL. The tract at residues 190–271 is interaction with TSG101, VPS37B and VPS28; sequence SRASTLRRTD…AAARLPPSVS (82 aa). Phosphoserine is present on residues Ser-193 and Ser-200. The residue at position 202 (Tyr-202) is a Phosphotyrosine. A Phosphoserine modification is found at Ser-205. The UMA domain maps to 213 to 263; the sequence is MDGVPFTLHPRFEGKSCGPLNLSAFGDLTIKSLADIEKEYNYGFVVEKTAA.

This sequence belongs to the MVB12 family. As to quaternary structure, component of the ESCRT-I complex (endosomal sorting complex required for transport I) which consists of TSG101, VPS28, a VPS37 protein (VPS37A to -D) and MVB12A or MVB12B in a 1:1:1:1 stoichiometry. Interacts with CD2AP and CIN85/SH3KBP1. Interacts with CD2AP (via one of the SH3 domains). Interacts with TSG101; the association appears to be mediated by the TSG101-VPS37 binary subcomplex. Interacts with VPS28. Interacts with VPS37B; the association appears to be mediated by the TSG101-VPS37 binary subcomplex. Interacts with VPS37C; the association appears to be mediated by the TSG101-VPS37 binary subcomplex. Interacts with VPS37D; the association appears to be mediated by the TSG101-VPS37 binary subcomplex. Interacts with CEP55. In terms of processing, phosphorylated on Tyr-202 upon EGF stimulation. Phosphorylation is required for interaction with CD2AP and CIN85/SH3KBP1.

The protein resides in the cytoplasm. The protein localises to the cytoskeleton. Its subcellular location is the nucleus. It localises to the endosome. It is found in the microtubule organizing center. The protein resides in the centrosome. The protein localises to the late endosome membrane. Component of the ESCRT-I complex, a regulator of vesicular trafficking process. Required for the sorting of endocytic ubiquitinated cargos into multivesicular bodies. May be involved in the ligand-mediated internalization and down-regulation of EGF receptor. In Mus musculus (Mouse), this protein is Multivesicular body subunit 12A (Mvb12a).